A 262-amino-acid chain; its full sequence is Purine nucleoside phosphorylase SSP1584 (262 aa).

Zn(2+)-binding residues include histidine 79, cysteine 124, and histidine 141.

The protein belongs to the purine nucleoside phosphorylase YfiH/LACC1 family. As to quaternary structure, homodimer. Cu(2+) is required as a cofactor. Requires Zn(2+) as cofactor.

The enzyme catalyses adenosine + phosphate = alpha-D-ribose 1-phosphate + adenine. It carries out the reaction S-methyl-5'-thioadenosine + phosphate = 5-(methylsulfanyl)-alpha-D-ribose 1-phosphate + adenine. The catalysed reaction is inosine + phosphate = alpha-D-ribose 1-phosphate + hypoxanthine. It catalyses the reaction adenosine + H2O + H(+) = inosine + NH4(+). Its function is as follows. Purine nucleoside enzyme that catalyzes the phosphorolysis of adenosine and inosine nucleosides, yielding D-ribose 1-phosphate and the respective free bases, adenine and hypoxanthine. Also catalyzes the phosphorolysis of S-methyl-5'-thioadenosine into adenine and S-methyl-5-thio-alpha-D-ribose 1-phosphate. Also has adenosine deaminase activity. The protein is Purine nucleoside phosphorylase SSP1584 of Staphylococcus saprophyticus subsp. saprophyticus (strain ATCC 15305 / DSM 20229 / NCIMB 8711 / NCTC 7292 / S-41).